Consider the following 619-residue polypeptide: ATP-dependent zinc metalloprotease FtsH (619 aa).

The Cytoplasmic portion of the chain corresponds to 1-11 (MDKQSKFRIKT). The helical transmembrane segment at 12–32 (FFKKIIFFLIIFCFFYFFNFI) threads the bilayer. Residues 33-131 (KKTKKITHTT…FKNYKIYTVL (99 aa)) are Periplasmic-facing. Residues 132–152 (NFFYDYGFFLMIIIICWIFIF) traverse the membrane as a helical segment. Topologically, residues 153–619 (RKIASRSSES…FKEDFASILD (467 aa)) are cytoplasmic. 224–231 (GPPGTGKT) is a binding site for ATP. Histidine 447 is a Zn(2+) binding site. Glutamate 448 is an active-site residue. Residues histidine 451 and aspartate 522 each contribute to the Zn(2+) site.

This sequence in the central section; belongs to the AAA ATPase family. In the C-terminal section; belongs to the peptidase M41 family. Homohexamer. The cofactor is Zn(2+).

It localises to the cell inner membrane. Acts as a processive, ATP-dependent zinc metallopeptidase for both cytoplasmic and membrane proteins. Plays a role in the quality control of integral membrane proteins. In Karelsulcia muelleri (strain DMIN) (Sulcia muelleri), this protein is ATP-dependent zinc metalloprotease FtsH.